The chain runs to 108 residues: Succinate dehydrogenase assembly factor 4, mitochondrial (108 aa).

Residues 1–20 (MTPSRLPWLLSWVSATAWRA) constitute a mitochondrion transit peptide. The segment at 31 to 108 (RKTSSSQGGK…WERKGRCIDF (78 aa)) is disordered. Composition is skewed to basic and acidic residues over residues 52 to 87 (KLPE…EKGG) and 95 to 108 (RYGD…CIDF).

Belongs to the SDHAF4 family. Interacts with SDHA in its FAD-bound form.

The protein resides in the mitochondrion matrix. Functionally, plays an essential role in the assembly of succinate dehydrogenase (SDH), an enzyme complex (also referred to as respiratory complex II) that is a component of both the tricarboxylic acid (TCA) cycle and the mitochondrial electron transport chain, and which couples the oxidation of succinate to fumarate with the reduction of ubiquinone (coenzyme Q) to ubiquinol. Binds to the flavoprotein subunit SDHA in its FAD-bound form, blocking the generation of excess reactive oxygen species (ROS) and facilitating its assembly with the iron-sulfur protein subunit SDHB into the SDH catalytic dimer. The polypeptide is Succinate dehydrogenase assembly factor 4, mitochondrial (Homo sapiens (Human)).